Reading from the N-terminus, the 289-residue chain is Leucine--tRNA ligase subunit beta (289 aa).

A 'KMSKS' region motif is present at residues 45-49 (KMSKS). An ATP-binding site is contributed by K48.

This sequence belongs to the class-I aminoacyl-tRNA synthetase family. In terms of assembly, seems to consist of an alpha chain and a beta chain.

Its subcellular location is the cytoplasm. It carries out the reaction tRNA(Leu) + L-leucine + ATP = L-leucyl-tRNA(Leu) + AMP + diphosphate. This is Leucine--tRNA ligase subunit beta (leuS') from Aquifex aeolicus (strain VF5).